The chain runs to 176 residues: CDP-archaeol synthase (176 aa).

Helical transmembrane passes span Gly41–Asn61, Ile73–Phe93, Val114–Phe134, and Phe138–Leu158.

The protein belongs to the CDP-archaeol synthase family. Requires Mg(2+) as cofactor.

Its subcellular location is the cell membrane. It catalyses the reaction 2,3-bis-O-(geranylgeranyl)-sn-glycerol 1-phosphate + CTP + H(+) = CDP-2,3-bis-O-(geranylgeranyl)-sn-glycerol + diphosphate. It participates in membrane lipid metabolism; glycerophospholipid metabolism. Its function is as follows. Catalyzes the formation of CDP-2,3-bis-(O-geranylgeranyl)-sn-glycerol (CDP-archaeol) from 2,3-bis-(O-geranylgeranyl)-sn-glycerol 1-phosphate (DGGGP) and CTP. This reaction is the third ether-bond-formation step in the biosynthesis of archaeal membrane lipids. This is CDP-archaeol synthase from Methanocorpusculum labreanum (strain ATCC 43576 / DSM 4855 / Z).